The chain runs to 555 residues: Glutamate--tRNA ligase (555 aa).

A 'HIGH' region motif is present at residues 100-110; the sequence is PNPSGPLHIGH.

It belongs to the class-I aminoacyl-tRNA synthetase family. Glutamate--tRNA ligase type 2 subfamily.

The protein resides in the cytoplasm. The enzyme catalyses tRNA(Glu) + L-glutamate + ATP = L-glutamyl-tRNA(Glu) + AMP + diphosphate. In terms of biological role, catalyzes the attachment of glutamate to tRNA(Glu) in a two-step reaction: glutamate is first activated by ATP to form Glu-AMP and then transferred to the acceptor end of tRNA(Glu). The sequence is that of Glutamate--tRNA ligase from Methanococcus maripaludis (strain C6 / ATCC BAA-1332).